Here is a 226-residue protein sequence, read N- to C-terminus: Ribosome maturation factor RimM (226 aa).

The 82-residue stretch at 144-225 (ADEFYWVDLI…RIVVDWEADY (82 aa)) folds into the PRC barrel domain.

This sequence belongs to the RimM family. As to quaternary structure, binds ribosomal protein uS19.

The protein localises to the cytoplasm. Functionally, an accessory protein needed during the final step in the assembly of 30S ribosomal subunit, possibly for assembly of the head region. Essential for efficient processing of 16S rRNA. May be needed both before and after RbfA during the maturation of 16S rRNA. It has affinity for free ribosomal 30S subunits but not for 70S ribosomes. The polypeptide is Ribosome maturation factor RimM (Burkholderia ambifaria (strain ATCC BAA-244 / DSM 16087 / CCUG 44356 / LMG 19182 / AMMD) (Burkholderia cepacia (strain AMMD))).